The sequence spans 2128 residues: Non-reducing polyketide synthase albA (2128 aa).

An N-terminal acylcarrier protein transacylase domain (SAT) region spans residues 8–244; the sequence is YLFGDQTSDI…VKAPIHGPYH (237 aa). Residues 375 to 806 enclose the Ketosynthase family 3 (KS3) domain; it reads NSKIAIIGMS…GGNTALLLED (432 aa). Catalysis depends on for beta-ketoacyl synthase activity residues Cys547, His682, and His724. Positions 912 to 1232 are malonyl-CoA:ACP transacylase (MAT) domain; it reads FVFTGQGAQY…LASLHLAGID (321 aa). The For acyl/malonyl transferase activity role is filled by Ser1001. The tract at residues 1286–1425 is N-terminal hotdog fold; sequence HEYLTTAAQK…CTVRFFDCAA (140 aa). In terms of domain architecture, PKS/mFAS DH spans 1286 to 1598; that stretch reads HEYLTTAAQK…FQALSRKILD (313 aa). The segment at 1290–1603 is product template (PT) domain; sequence TTAAQKVIET…RKILDTVLPP (314 aa). His1326 functions as the Proton acceptor; for dehydratase activity in the catalytic mechanism. The interval 1452–1598 is C-terminal hotdog fold; sequence DAHRLGRGMV…FQALSRKILD (147 aa). Asp1511 functions as the Proton donor; for dehydratase activity in the catalytic mechanism. In terms of domain architecture, Carrier 1 spans 1618–1695; the sequence is PSAPSLVKRA…DFKQFLAPMS (78 aa). Ser1655 carries the O-(pantetheine 4'-phosphoryl)serine modification. Positions 1695–1740 are disordered; the sequence is SQGEASDGSTSDPESSSSFNGGSSTDESSAGSPVSSPPNEKVTQVE. A compositionally biased stretch (low complexity) spans 1700-1723; it reads SDGSTSDPESSSSFNGGSSTDESS. Polar residues predominate over residues 1724 to 1740; it reads AGSPVSSPPNEKVTQVE. The region spanning 1739–1816 is the Carrier 2 domain; it reads VEQHATIKEI…DVEDALGLKP (78 aa). Ser1776 carries the post-translational modification O-(pantetheine 4'-phosphoryl)serine. Residues 1854 to 2126 are claisen cyclase domain; it reads SPHPRSTSIL…ELGSFIGNAM (273 aa). The active-site For Claisen cyclase activity is the Ser1944.

It catalyses the reaction 6 malonyl-CoA + acetyl-CoA + 6 H(+) = naphtopyrone YWA1 + 6 CO2 + 7 CoA + H2O. It participates in secondary metabolite biosynthesis. Functionally, non-reducing polyketide synthase; part of the gene cluster that mediates the biosynthesis of aurasperone B, a dimeric gamma-naphthopyrone. The first step in the biosynthesis of aurasperone B is the production of gamma-naphthopyrone precursor YWA1 by the non-reducing polyketide synthase albA, via condensation of one acetyl-CoA starter unit with 6 malonyl-CoA units. YWA1 is then methylated by aunE at position C-6 to yield foncesin which is further methylated at position C-8 by aunD to produce fonsecin B. A key enzyme in the biosynthetic pathway is the cytochrome P450 monooxygenase aunB which catalyzes the oxidative dimerization of fonsecin B to aurasperone B. AunB also catalyzes the oxidative dimerization of rubrofusarin B into aurasperone A. The polypeptide is Non-reducing polyketide synthase albA (Aspergillus niger (strain ATCC 1015 / CBS 113.46 / FGSC A1144 / LSHB Ac4 / NCTC 3858a / NRRL 328 / USDA 3528.7)).